The primary structure comprises 230 residues: Orotidine 5'-phosphate decarboxylase (230 aa).

Substrate contacts are provided by residues Asp-10, Lys-32, 59–68 (DLKYHDIPNT), Thr-119, Arg-180, Gln-189, Gly-209, and Arg-210. Residue Lys-61 is the Proton donor of the active site.

The protein belongs to the OMP decarboxylase family. Type 1 subfamily. Homodimer.

The enzyme catalyses orotidine 5'-phosphate + H(+) = UMP + CO2. The protein operates within pyrimidine metabolism; UMP biosynthesis via de novo pathway; UMP from orotate: step 2/2. Functionally, catalyzes the decarboxylation of orotidine 5'-monophosphate (OMP) to uridine 5'-monophosphate (UMP). The chain is Orotidine 5'-phosphate decarboxylase from Glaesserella parasuis serovar 5 (strain SH0165) (Haemophilus parasuis).